The sequence spans 295 residues: 2-methylisocitrate lyase (295 aa).

Position 45 to 47 (45 to 47 (SGG)) interacts with substrate. The Mg(2+) site is built by D85 and D87. Residues 123 to 124 (CG), R158, E188, 210 to 212 (NIT), R241, and R270 each bind substrate.

It belongs to the isocitrate lyase/PEP mutase superfamily. Methylisocitrate lyase family. Homotetramer; dimer of dimers. It depends on Mg(2+) as a cofactor.

The enzyme catalyses (2S,3R)-3-hydroxybutane-1,2,3-tricarboxylate = pyruvate + succinate. It participates in organic acid metabolism; propanoate degradation. Its function is as follows. Involved in the catabolism of short chain fatty acids (SCFA) via the 2-methylcitrate cycle I (propionate degradation route). Catalyzes the thermodynamically favored C-C bond cleavage of (2R,3S)-2-methylisocitrate to yield pyruvate and succinate via an alpha-carboxy-carbanion intermediate. This Salmonella typhimurium (strain LT2 / SGSC1412 / ATCC 700720) protein is 2-methylisocitrate lyase.